The chain runs to 410 residues: Probable nicotinate phosphoribosyltransferase (410 aa).

Nicotinate contacts are provided by Tyr15, Phe170, and Thr220. Residue His223 is modified to Phosphohistidine. Residue Thr348 participates in 5-phospho-alpha-D-ribose 1-diphosphate binding.

This sequence belongs to the NAPRTase family. Requires Mg(2+) as cofactor. Mn(2+) serves as cofactor. Transiently phosphorylated on a His residue during the reaction cycle. Phosphorylation strongly increases the affinity for substrates and increases the rate of nicotinate D-ribonucleotide production. Dephosphorylation regenerates the low-affinity form of the enzyme, leading to product release.

It carries out the reaction nicotinate + 5-phospho-alpha-D-ribose 1-diphosphate + ATP + H2O = nicotinate beta-D-ribonucleotide + ADP + phosphate + diphosphate. The protein operates within cofactor biosynthesis; NAD(+) biosynthesis; nicotinate D-ribonucleotide from nicotinate: step 1/1. Its function is as follows. Catalyzes the first step in the biosynthesis of NAD from nicotinic acid, the ATP-dependent synthesis of beta-nicotinate D-ribonucleotide from nicotinate and 5-phospho-D-ribose 1-phosphate. Helps prevent cellular oxidative stress via its role in NAD biosynthesis. This Schizosaccharomyces pombe (strain 972 / ATCC 24843) (Fission yeast) protein is Probable nicotinate phosphoribosyltransferase.